Consider the following 128-residue polypeptide: Myelin basic protein (128 aa).

Disordered stretches follow at residues 1–24 (AGGA…EPAT) and 82–128 (TDGQ…PARR). 2 stretches are compositionally biased toward basic and acidic residues: residues 11–23 (GSRK…KEPA) and 96–107 (KSREAYRGRKDG).

It belongs to the myelin basic protein family. In terms of processing, the N-terminus is blocked.

The protein resides in the myelin membrane. This protein may function to maintain proper structure of myelin. The chain is Myelin basic protein (MBP) from Carcharhinus obscurus (Dusky shark).